A 2603-amino-acid chain; its full sequence is Ankyrin repeat domain-containing protein 17 (2603 aa).

Methionine 1 carries the N-acetylmethionine modification. A compositionally biased stretch (low complexity) spans methionine 1–glutamate 32. The disordered stretch occupies residues methionine 1–glutamate 127. Phosphoserine is present on residues serine 15 and serine 42. Positions proline 68–threonine 77 are enriched in basic residues. The segment covering serine 82–asparagine 92 has biased composition (low complexity). Positions serine 93 to threonine 107 are enriched in gly residues. Residues serine 112–glutamate 127 show a composition bias toward acidic residues. Phosphoserine is present on serine 152. ANK repeat units follow at residues serine 229–glutamate 258, glutamate 262–aspartate 291, glycine 296–alanine 325, threonine 329–aspartate 358, asparagine 362–threonine 391, phenylalanine 396–histidine 425, glutamate 429–methionine 458, serine 462–glutamate 491, glutamate 495–alanine 524, threonine 529–leucine 558, glycine 559–alanine 588, threonine 592–histidine 621, glycine 625–arginine 654, asparagine 659–histidine 688, and aspartate 692–alanine 721. Lysine 314 is covalently cross-linked (Glycyl lysine isopeptide (Lys-Gly) (interchain with G-Cter in SUMO2)). Positions valine 770–glutamine 792 are disordered. Over residues alanine 775–glutamine 792 the composition is skewed to polar residues. Serine 799 carries the phosphoserine modification. ANK repeat units lie at residues asparagine 1078 to histidine 1107, lysine 1111 to alanine 1140, threonine 1145 to histidine 1174, serine 1178 to serine 1207, leucine 1213 to alanine 1242, asparagine 1247 to histidine 1276, threonine 1280 to alanine 1309, serine 1315 to valine 1344, lysine 1348 to alanine 1377, and arginine 1381 to serine 1410. Residues valine 1438 to glutamate 1522 adopt a coiled-coil conformation. Serine 1453 carries the phosphoserine modification. 2 disordered regions span residues alanine 1475–glutamate 1496 and glutamate 1513–glutamate 1713. Residues arginine 1477–lysine 1487 show a composition bias toward basic residues. Composition is skewed to low complexity over residues leucine 1526 to threonine 1546, glutamate 1598 to serine 1607, and serine 1616 to serine 1636. Position 1631 is a phosphoserine (serine 1631). 2 stretches are compositionally biased toward polar residues: residues valine 1638–glutamine 1648 and leucine 1671–glycine 1699. A phosphoserine mark is found at serine 1692, serine 1696, and serine 1705. One can recognise a KH domain in the interval arginine 1721–isoleucine 1785. Residue arginine 1870 is modified to Asymmetric dimethylarginine. 3 disordered regions span residues proline 1902–arginine 1991, threonine 2007–alanine 2195, and valine 2269–valine 2327. 2 stretches are compositionally biased toward low complexity: residues serine 1946–serine 1989 and threonine 2007–threonine 2024. A phosphoserine mark is found at serine 2038, serine 2040, serine 2041, serine 2043, serine 2055, and serine 2063. 3 stretches are compositionally biased toward low complexity: residues alanine 2068 to serine 2077, arginine 2087 to proline 2108, and proline 2175 to proline 2189. Polar residues predominate over residues valine 2269–serine 2298. Over residues phenylalanine 2303–serine 2313 the composition is skewed to pro residues. Serine 2373 is modified (phosphoserine). The interval leucine 2378–glycine 2447 is disordered. Polar residues predominate over residues threonine 2379–glutamine 2391. Residues serine 2392–serine 2411 show a composition bias toward low complexity. Position 2401 is a phosphoserine (serine 2401). Over residues isoleucine 2435–glycine 2447 the composition is skewed to polar residues.

In terms of assembly, interacts (via N-terminus) with NOD2. Interacts with CDK2, MCM3, MCM5, MCM7, CDC6 and PCNA. Interacts with MAVS and IFIH1. Interacts (via the second ankyrin repeat cluster) with RIGI. Post-translationally, phosphorylated by CDK2. Highly expressed in fetal liver. Detected in adult liver cells, ovarian oocytes, seminiferous tubules of the testes and pelvic region of the kidney. It was not detected in heart, gut, lung, spleen and skeletal muscle. Earliest specific in situ marker of hepatic differentiation during embryogenesis, useful for characterization of inductive events involved in hepatic specification.

The protein localises to the cytoplasm. The protein resides in the nucleus. Could play pivotal roles in cell cycle and DNA regulation. Involved in innate immune defense against viruse by positively regulating the viral dsRNA receptors RIGI and IFIH1 signaling pathways. Involves in NOD2- and NOD1-mediated responses to bacteria suggesting a role in innate antibacterial immune pathways too. Could play a central role for the formation and/or maintenance of the blood vessels of the circulation system. The protein is Ankyrin repeat domain-containing protein 17 (Ankrd17) of Mus musculus (Mouse).